The sequence spans 145 residues: Procyclic form-specific polypeptide B-alpha (145 aa).

Positions M1–A27 are cleaved as a signal peptide. The interval A28–L127 is disordered. The segment covering P31–A52 has biased composition (basic and acidic residues). 32 repeat units span residues D59–P60, D61–P62, E63–P64, E65–P66, E67–P68, E69–P70, E71–P72, E73–P74, E75–P76, E77–P78, E79–P80, E81–P82, E83–P84, E85–P86, E87–P88, E89–P90, E91–P92, E93–P94, E95–P96, E97–P98, E99–P100, E101–P102, E103–P104, E105–P106, E107–P108, E109–P110, E111–P112, E113–P114, E115–P116, E117–P118, E119–P120, and E121–P122. The segment at D59–P122 is 32 X 2 AA tandem repeats of [DE]-P. Residues P60–P120 show a composition bias toward acidic residues. G123 carries GPI-anchor amidated glycine lipidation. Residues A124–F145 constitute a propeptide that is removed on maturation.

The protein localises to the cell membrane. Major surface antigen of procyclic forms. The polypeptide is Procyclic form-specific polypeptide B-alpha (PARPB) (Trypanosoma brucei brucei).